A 37-amino-acid polypeptide reads, in one-letter code: Esculentin-2A (37 aa).

A disulfide bridge links Cys-31 with Cys-37.

The protein belongs to the frog skin active peptide (FSAP) family. Esculentin subfamily. In terms of tissue distribution, expressed by the skin glands.

The protein localises to the secreted. Shows antibacterial activity against representative Gram-negative and Gram-positive bacterial species, and hemolytic activity. In Pelophylax lessonae (Pool frog), this protein is Esculentin-2A.